We begin with the raw amino-acid sequence, 362 residues long: Small ribosomal subunit protein uS4m (362 aa).

The S4 RNA-binding domain occupies 105-179 (TRFDVILLRL…FYKEILVEKI (75 aa)).

This sequence belongs to the universal ribosomal protein uS4 family. In terms of assembly, component of the mitochondrial ribosome small subunit.

It is found in the mitochondrion. This Arabidopsis thaliana (Mouse-ear cress) protein is Small ribosomal subunit protein uS4m (RPS4).